We begin with the raw amino-acid sequence, 446 residues long: Exodeoxyribonuclease 7 large subunit (446 aa).

It belongs to the XseA family. Heterooligomer composed of large and small subunits.

The protein localises to the cytoplasm. The catalysed reaction is Exonucleolytic cleavage in either 5'- to 3'- or 3'- to 5'-direction to yield nucleoside 5'-phosphates.. In terms of biological role, bidirectionally degrades single-stranded DNA into large acid-insoluble oligonucleotides, which are then degraded further into small acid-soluble oligonucleotides. In Streptococcus agalactiae serotype Ia (strain ATCC 27591 / A909 / CDC SS700), this protein is Exodeoxyribonuclease 7 large subunit.